Here is a 158-residue protein sequence, read N- to C-terminus: NAD(P)H-quinone oxidoreductase subunit N (158 aa).

This sequence belongs to the complex I NdhN subunit family. As to quaternary structure, NDH-1 can be composed of about 15 different subunits; different subcomplexes with different compositions have been identified which probably have different functions.

It localises to the cellular thylakoid membrane. It catalyses the reaction a plastoquinone + NADH + (n+1) H(+)(in) = a plastoquinol + NAD(+) + n H(+)(out). The catalysed reaction is a plastoquinone + NADPH + (n+1) H(+)(in) = a plastoquinol + NADP(+) + n H(+)(out). In terms of biological role, NDH-1 shuttles electrons from an unknown electron donor, via FMN and iron-sulfur (Fe-S) centers, to quinones in the respiratory and/or the photosynthetic chain. The immediate electron acceptor for the enzyme in this species is believed to be plastoquinone. Couples the redox reaction to proton translocation, and thus conserves the redox energy in a proton gradient. Cyanobacterial NDH-1 also plays a role in inorganic carbon-concentration. The chain is NAD(P)H-quinone oxidoreductase subunit N from Prochlorococcus marinus (strain MIT 9215).